A 361-amino-acid polypeptide reads, in one-letter code: Phospho-N-acetylmuramoyl-pentapeptide-transferase (361 aa).

The next 10 membrane-spanning stretches (helical) occupy residues 25-45, 73-93, 98-118, 139-159, 168-188, 200-220, 237-257, 264-284, 289-309, and 339-359; these read RGIL…PAVI, TMGG…WGDL, VWLV…DDWI, IFGL…AAIT, IALP…IVGF, GLAI…AYAS, AGEL…FLWF, VFMG…VAVI, LVLV…MIQV, and VIVR…ATLK.

The protein belongs to the glycosyltransferase 4 family. MraY subfamily. It depends on Mg(2+) as a cofactor.

The protein localises to the cell inner membrane. The catalysed reaction is UDP-N-acetyl-alpha-D-muramoyl-L-alanyl-gamma-D-glutamyl-meso-2,6-diaminopimeloyl-D-alanyl-D-alanine + di-trans,octa-cis-undecaprenyl phosphate = di-trans,octa-cis-undecaprenyl diphospho-N-acetyl-alpha-D-muramoyl-L-alanyl-D-glutamyl-meso-2,6-diaminopimeloyl-D-alanyl-D-alanine + UMP. The protein operates within cell wall biogenesis; peptidoglycan biosynthesis. In terms of biological role, catalyzes the initial step of the lipid cycle reactions in the biosynthesis of the cell wall peptidoglycan: transfers peptidoglycan precursor phospho-MurNAc-pentapeptide from UDP-MurNAc-pentapeptide onto the lipid carrier undecaprenyl phosphate, yielding undecaprenyl-pyrophosphoryl-MurNAc-pentapeptide, known as lipid I. This Xanthomonas campestris pv. campestris (strain 8004) protein is Phospho-N-acetylmuramoyl-pentapeptide-transferase.